Reading from the N-terminus, the 196-residue chain is Segregation and condensation protein B (196 aa).

It belongs to the ScpB family. As to quaternary structure, homodimer. Homodimerization may be required to stabilize the binding of ScpA to the Smc head domains. Component of a cohesin-like complex composed of ScpA, ScpB and the Smc homodimer, in which ScpA and ScpB bind to the head domain of Smc. The presence of the three proteins is required for the association of the complex with DNA.

It localises to the cytoplasm. Its function is as follows. Participates in chromosomal partition during cell division. May act via the formation of a condensin-like complex containing Smc and ScpA that pull DNA away from mid-cell into both cell halves. This Pediococcus pentosaceus (strain ATCC 25745 / CCUG 21536 / LMG 10740 / 183-1w) protein is Segregation and condensation protein B.